Here is a 196-residue protein sequence, read N- to C-terminus: Large ribosomal subunit protein uL5 (196 aa).

Belongs to the universal ribosomal protein uL5 family. In terms of assembly, part of the 50S ribosomal subunit; part of the 5S rRNA/L5/L18/L25 subcomplex. Contacts the 5S rRNA and the P site tRNA. Forms a bridge to the 30S subunit in the 70S ribosome.

In terms of biological role, this is one of the proteins that bind and probably mediate the attachment of the 5S RNA into the large ribosomal subunit, where it forms part of the central protuberance. In the 70S ribosome it contacts protein S13 of the 30S subunit (bridge B1b), connecting the 2 subunits; this bridge is implicated in subunit movement. Contacts the P site tRNA; the 5S rRNA and some of its associated proteins might help stabilize positioning of ribosome-bound tRNAs. This is Large ribosomal subunit protein uL5 from Chlorobium phaeobacteroides (strain BS1).